Consider the following 444-residue polypeptide: Chitinase-like protein Idgf4 (444 aa).

An N-terminal signal peptide occupies residues 1-22 (MKLLLILLGALLAVLTIKRTSA). The GH18 domain occupies 27–444 (NHLICYYDGT…ILRAIKFKFQ (418 aa)). A disulfide bridge connects residues cysteine 31 and cysteine 58. The N-linked (GlcNAc...) asparagine glycan is linked to asparagine 226. A disulfide bridge connects residues cysteine 345 and cysteine 428.

This sequence belongs to the glycosyl hydrolase 18 family. IDGF subfamily. Post-translationally, glycosylated.

The protein resides in the secreted. In terms of biological role, cooperates with insulin-like peptides to stimulate the proliferation, polarization and motility of imaginal disk cells. May act by stabilizing the binding of insulin-like peptides to its receptor through a simultaneous interaction with both molecules to form a multiprotein signaling complex. This chain is Chitinase-like protein Idgf4 (Idgf4), found in Glossina morsitans morsitans (Savannah tsetse fly).